Here is a 437-residue protein sequence, read N- to C-terminus: O-methyltransferase elcB (437 aa).

Residue D269 participates in S-adenosyl-L-methionine binding. The active-site Proton acceptor is H319.

The protein belongs to the class I-like SAM-binding methyltransferase superfamily. Cation-independent O-methyltransferase family. COMT subfamily.

The protein operates within secondary metabolite biosynthesis. In terms of biological role, O-methyltransferase; part of the gene cluster that mediates the biosynthesis of elsinochrome C, a perelyenequinone phytotoxin structurally similar to cercosporin. The first step of elsinochrome C biosynthesis is performed by the polyketide synthase elcA which catalyzes the formation of nor-toralactone. The starter unit acyltransferase (SAT) domain of elcA initiates polyketide extension by the selective utilization of acetyl-CoA, which is elongated to the heptaketide in the beta-ketoacyl synthase (KS) domain by successive condensations with six malonyl units introduced by the malonyl acyltransferase (MAT) domain. The product template (PT) domain catalyzes C4-C9 and C2-C11 aldol cyclizations and dehydrations to a trihydroxynaphthalene, which is thought to be delivered to the thioesterase (TE) domain for product release. The bifunctional enzyme elcB then methylates nor-toralactone to toralactone before conducting an unusual oxidative aromatic ring opening. The next step in perylenequinone biosynthesis is an O-methylation at the nascent OH-6 of the elcB product performed by the O-methyltransferase elcD. The oxidative coupling of the two monomeric naphthol units in perylenequinone biosynthesis is catalyzed by the FAD-dependent monooxygenase elcE and the multicopper oxidase elcG. ElcG might catalyze the first intermolecular coupling in a regio- and stereo-selective manner via a phenol radical coupling mechanism and the elcE could forge the second C-C bond intramolecularly via a hydride transfer mechanism. The fasciclin domain-containing protein elcF might also play a role duting this step. The last piece of the puzzle in the biosynthesis of elsinochrome C is the additional annulation by enolate coupling to afford the dihydrobenzo(ghi)perylenequinone system, catalyzed by the FAD-dependent monooxygenase elcH. The polypeptide is O-methyltransferase elcB (Phaeosphaeria nodorum (strain SN15 / ATCC MYA-4574 / FGSC 10173) (Glume blotch fungus)).